The chain runs to 394 residues: Elongation factor Tu 1 (394 aa).

Positions 10 to 204 constitute a tr-type G domain; sequence KPHVNVGTIG…ALDSYIPEPE (195 aa). The G1 stretch occupies residues 19 to 26; that stretch reads GHVDHGKT. 19–26 is a binding site for GTP; that stretch reads GHVDHGKT. Threonine 26 serves as a coordination point for Mg(2+). Residues 60-64 are G2; the sequence is GITIN. The segment at 81-84 is G3; that stretch reads DCPG. GTP contacts are provided by residues 81-85 and 136-139; these read DCPGH and NKCD. The interval 136–139 is G4; it reads NKCD. The segment at 174–176 is G5; sequence SAL.

This sequence belongs to the TRAFAC class translation factor GTPase superfamily. Classic translation factor GTPase family. EF-Tu/EF-1A subfamily. Monomer.

The protein localises to the cytoplasm. It catalyses the reaction GTP + H2O = GDP + phosphate + H(+). GTP hydrolase that promotes the GTP-dependent binding of aminoacyl-tRNA to the A-site of ribosomes during protein biosynthesis. This Shewanella oneidensis (strain ATCC 700550 / JCM 31522 / CIP 106686 / LMG 19005 / NCIMB 14063 / MR-1) protein is Elongation factor Tu 1.